The primary structure comprises 234 residues: Sugar fermentation stimulation protein A (234 aa).

Residues 201 to 220 constitute a DNA-binding region (H-T-H motif); the sequence is LLSEAQQRGVEILAYKAEIS.

It belongs to the SfsA family.

Functionally, binds to DNA non-specifically. Could be a regulatory factor involved in maltose metabolism. The chain is Sugar fermentation stimulation protein A from Shigella flexneri serotype 5b (strain 8401).